Reading from the N-terminus, the 538-residue chain is MDQSGVRNDAFGVDKFGLKNLKAVHWNLGTAALYEYALRNGEAELTREGALCAETGEFTGRSPKDKYTVRDALTDKTMSWSTNQSITPEQFAVLHADFIKHAEGMTLYAQDLCGGADPKFQIKTRVYTELAWHSLFIRTMLRRPETAALADFVPELTIIDLPSFRADPARHGVRSPTVVAIDFTRKIVLIGGTHYAGEMKKSVFTTLNFYLPEQGVLPMHCSANVGAKGDAAVFFGLSGTGKTTLSADPQRTLLGDDEHGWGPDGVFNFEGGCYAKTIRLSREAEPAIYDASLRFGAVLENVVVDSQTRAVDFDDGSKTENTRSAYPLDAIPNASPTGCAGQPKNIVMLAADAFGVLPPIAKLTPSQAMYHFLSGYTAKVAGTERGLGSEPQPEFSACFGAPFLPRDPTVYGEMLRKLIAKHNVDCWLVNTGWTGGKFGIGNRMPIKVTRALLTAALDGSLRNVTFRTDPYFGFAVPTALPGVPSDILDPINTWADKADFKKTAQALVSMFRQNFTKFEKLVDADVLAAAPDARQAAE.

Substrate-binding residues include arginine 61, tyrosine 195, and lysine 201. Residues lysine 201, histidine 220, and 236 to 244 (GLSGTGKTT) contribute to the ATP site. Residues lysine 201 and histidine 220 each contribute to the Mn(2+) site. Aspartate 257 contacts Mn(2+). ATP-binding residues include glutamate 285, arginine 323, and threonine 449. Arginine 323 is a substrate binding site.

This sequence belongs to the phosphoenolpyruvate carboxykinase (ATP) family. The cofactor is Mn(2+).

It localises to the cytoplasm. It catalyses the reaction oxaloacetate + ATP = phosphoenolpyruvate + ADP + CO2. Its pathway is carbohydrate biosynthesis; gluconeogenesis. Involved in the gluconeogenesis. Catalyzes the conversion of oxaloacetate (OAA) to phosphoenolpyruvate (PEP) through direct phosphoryl transfer between the nucleoside triphosphate and OAA. This is Phosphoenolpyruvate carboxykinase (ATP) from Afipia carboxidovorans (strain ATCC 49405 / DSM 1227 / KCTC 32145 / OM5) (Oligotropha carboxidovorans).